Here is a 289-residue protein sequence, read N- to C-terminus: Digeranylgeranylglyceryl phosphate synthase (289 aa).

The next 8 helical transmembrane spans lie at 17-37 (CLMA…ILTS), 50-70 (LFSS…GNAI), 106-126 (FALG…IALF), 141-161 (TPLL…LFGA), 163-183 (VFGL…ALAI), 221-241 (LIGF…MLGL), 243-263 (YLYL…QLLA), and 269-289 (KSSK…IAGV).

Belongs to the UbiA prenyltransferase family. DGGGP synthase subfamily. The cofactor is Mg(2+).

The protein resides in the cell membrane. It carries out the reaction sn-3-O-(geranylgeranyl)glycerol 1-phosphate + (2E,6E,10E)-geranylgeranyl diphosphate = 2,3-bis-O-(geranylgeranyl)-sn-glycerol 1-phosphate + diphosphate. It functions in the pathway membrane lipid metabolism; glycerophospholipid metabolism. Functionally, prenyltransferase that catalyzes the transfer of the geranylgeranyl moiety of geranylgeranyl diphosphate (GGPP) to the C2 hydroxyl of (S)-3-O-geranylgeranylglyceryl phosphate (GGGP). This reaction is the second ether-bond-formation step in the biosynthesis of archaeal membrane lipids. The chain is Digeranylgeranylglyceryl phosphate synthase from Methanosarcina barkeri (strain Fusaro / DSM 804).